Here is a 666-residue protein sequence, read N- to C-terminus: DNA-directed RNA polymerase subunit beta' (666 aa).

Zn(2+) is bound by residues C69, C71, C87, and C90. Mg(2+)-binding residues include D489, D491, and D493.

This sequence belongs to the RNA polymerase beta' chain family. RpoC1 subfamily. In terms of assembly, in plastids the minimal PEP RNA polymerase catalytic core is composed of four subunits: alpha, beta, beta', and beta''. When a (nuclear-encoded) sigma factor is associated with the core the holoenzyme is formed, which can initiate transcription. Mg(2+) serves as cofactor. It depends on Zn(2+) as a cofactor.

The protein resides in the plastid. Its subcellular location is the chloroplast. The enzyme catalyses RNA(n) + a ribonucleoside 5'-triphosphate = RNA(n+1) + diphosphate. In terms of biological role, DNA-dependent RNA polymerase catalyzes the transcription of DNA into RNA using the four ribonucleoside triphosphates as substrates. This Chara vulgaris (Common stonewort) protein is DNA-directed RNA polymerase subunit beta'.